Here is a 196-residue protein sequence, read N- to C-terminus: Large ribosomal subunit protein uL6 (196 aa).

Belongs to the universal ribosomal protein uL6 family. As to quaternary structure, part of the 50S ribosomal subunit.

Its function is as follows. This protein binds to the 23S rRNA, and is important in its secondary structure. It is located near the subunit interface in the base of the L7/L12 stalk, and near the tRNA binding site of the peptidyltransferase center. This is Large ribosomal subunit protein uL6 from Pyrobaculum aerophilum (strain ATCC 51768 / DSM 7523 / JCM 9630 / CIP 104966 / NBRC 100827 / IM2).